We begin with the raw amino-acid sequence, 120 residues long: Nitrogen regulatory protein GlnK3 (120 aa).

Residues Thr40 and Gly48–Gln50 contribute to the ADP site. Residues Thr40 and Gly48 to Gln50 each bind ATP. Residues Gly48–Gly52 and Lys69 each bind 2-oxoglutarate. ADP-binding positions include Val75 and Gly98 to Arg101. Residues Val75 and Gly98–Arg101 each bind ATP. Gly98 contacts 2-oxoglutarate.

The protein belongs to the P(II) protein family. Homotrimer. Interacts and forms a complex with Amt3.

Its subcellular location is the cytoplasm. With respect to regulation, activity is influenced by intracellular pools of the effector molecules ATP, ADP and 2-oxoglutarate. It senses the cellular nitrogen status through 2-oxoglutarate, and the energy level of the cell by binding both ATP and ADP with different affinities. ATP and 2-oxoglutarate prohibit binding to Amt3. ADP promotes the complex formation. Its function is as follows. Involved in the regulation of nitrogen metabolism. Regulates the activity of its targets by protein-protein interaction in response to the nitrogen status of the cell. Regulates the activity of the ammonia channel Amt3 via direct interaction. The protein is Nitrogen regulatory protein GlnK3 of Archaeoglobus fulgidus (strain ATCC 49558 / DSM 4304 / JCM 9628 / NBRC 100126 / VC-16).